The primary structure comprises 655 residues: Fidgetin-like protein 1 (655 aa).

The segment at 289–313 (QQKKHSNQPQRNPGPLYGGGKKSLG) is disordered. ATP-binding positions include Ala-385 and 425 to 430 (GTGKTL).

Belongs to the AAA ATPase family. Hexamer. Mg(2+) is required as a cofactor.

The protein resides in the nucleus. It is found in the cytoplasm. It localises to the perinuclear region. It carries out the reaction ATP + H2O = ADP + phosphate + H(+). Its function is as follows. May be involved in DNA double-strand break (DBS) repair via homologous recombination (HR). May regulate osteoblast proliferation and differentiation. In Xenopus laevis (African clawed frog), this protein is Fidgetin-like protein 1 (fignl1).